A 152-amino-acid chain; its full sequence is Small ribosomal subunit protein uS11B (152 aa).

The segment at 131–152 (EDVTPIPSDSTRRKGGRRGRRL) is disordered. Residues 143–152 (RKGGRRGRRL) are compositionally biased toward basic residues.

Belongs to the universal ribosomal protein uS11 family.

The polypeptide is Small ribosomal subunit protein uS11B (Anopheles gambiae (African malaria mosquito)).